The sequence spans 210 residues: Ion-translocating oxidoreductase complex subunit G (210 aa).

The chain crosses the membrane as a helical span at residues 9–29 (SLVLALFAIAATALVTITYAL). Thr176 is subject to FMN phosphoryl threonine.

Belongs to the RnfG family. As to quaternary structure, the complex is composed of six subunits: RnfA, RnfB, RnfC, RnfD, RnfE and RnfG. The cofactor is FMN.

The protein localises to the cell inner membrane. Functionally, part of a membrane-bound complex that couples electron transfer with translocation of ions across the membrane. This chain is Ion-translocating oxidoreductase complex subunit G, found in Aliivibrio fischeri (strain MJ11) (Vibrio fischeri).